The sequence spans 305 residues: Mycothiol acetyltransferase (305 aa).

N-acetyltransferase domains follow at residues 10-153 (DRLD…LVVP) and 156-305 (ISLR…YARA). 1D-myo-inositol 2-(L-cysteinylamino)-2-deoxy-alpha-D-glucopyranoside is bound at residue Glu-38. Residue 82–84 (LAV) coordinates acetyl-CoA. 1D-myo-inositol 2-(L-cysteinylamino)-2-deoxy-alpha-D-glucopyranoside is bound by residues Glu-183, Lys-225, and Glu-238. Acetyl-CoA contacts are provided by residues 242–244 (VAI) and 249–255 (QGRGLGR). Tyr-276 contributes to the 1D-myo-inositol 2-(L-cysteinylamino)-2-deoxy-alpha-D-glucopyranoside binding site. 281–286 (NESALH) contacts acetyl-CoA.

Belongs to the acetyltransferase family. MshD subfamily. Monomer.

It carries out the reaction 1D-myo-inositol 2-(L-cysteinylamino)-2-deoxy-alpha-D-glucopyranoside + acetyl-CoA = mycothiol + CoA + H(+). Its function is as follows. Catalyzes the transfer of acetyl from acetyl-CoA to desacetylmycothiol (Cys-GlcN-Ins) to form mycothiol. This is Mycothiol acetyltransferase from Rhodococcus jostii (strain RHA1).